The chain runs to 312 residues: Glycine--tRNA ligase alpha subunit (312 aa).

Belongs to the class-II aminoacyl-tRNA synthetase family. Tetramer of two alpha and two beta subunits.

The protein resides in the cytoplasm. It carries out the reaction tRNA(Gly) + glycine + ATP = glycyl-tRNA(Gly) + AMP + diphosphate. The sequence is that of Glycine--tRNA ligase alpha subunit from Thiobacillus denitrificans (strain ATCC 25259 / T1).